A 373-amino-acid polypeptide reads, in one-letter code: 3-isopropylmalate dehydrogenase AMT6 (373 aa).

NADP(+) is bound at residue 77 to 79 (VGG). Residues Arg-97 and Arg-136 each coordinate substrate. Mg(2+) contacts are provided by Asp-227, Asp-252, and Asp-256. 284–289 (SRIRGL) provides a ligand contact to NADP(+).

Belongs to the isocitrate and isopropylmalate dehydrogenases family. In terms of assembly, homodimer. Mg(2+) is required as a cofactor. Mn(2+) serves as cofactor.

The catalysed reaction is (2R,3S)-3-isopropylmalate + NAD(+) = 4-methyl-2-oxopentanoate + CO2 + NADH. The protein operates within amino-acid biosynthesis; L-leucine biosynthesis; L-leucine from 3-methyl-2-oxobutanoate: step 3/4. It participates in mycotoxin biosynthesis. 3-isopropylmalate dehydrogenase; part of the gene clusters that mediate the biosynthesis of AM-toxins, host-selective toxins (HSTs) causing Alternaria blotch on apple, a worldwide distributed disease. AM-toxins are cyclic depsipeptides containing the 3 residues 2-hydroxy-isovaleric acid (2-HIV), dehydroalanine, L-alanine which are common for all 3 AM-toxins I to III. The fourth precursor is L-alpha-amino-methoxyphenyl-valeric acid (L-Amv) for AM-toxin I, L-alpha-amino-phenyl-valeric acid (L-Apv) for AM-toxin II, and L-alpha-amino-hydroxyphenyl-valeric acid (L-Ahv) for AM-toxin III. AM-toxins have two target sites for affecting susceptible apple cells; they cause invagination of the plasma membrane and electrolyte loss and chloroplast disorganization. The non-ribosomal peptide synthetase AMT1 contains 4 catalytic modules and is responsible for activation of each residue in AM-toxin. The aldo-keto reductase AMT2 catalyzes the conversion of 2-keto-isovaleric acid (2-KIV) to 2-hydroxy-isovaleric acid (2-HIV), one of the precursor residues incorporated by AMT1 during AM-toxin biosynthesis, by reduction of its ketone to an alcohol. The cytochrome P450 monooxygenase AMT3 and the thioesterase AMT4 are also important for AM-toxin production, but their exact function within the AM-toxin biosynthesis are not known yet. Up to 21 proteins (including AMT1 to AMT4) are predicted to be involved in AM-toxin biosynthesis since their expression ishighly up-regulated in AM-toxin-producing cultures. The sequence is that of 3-isopropylmalate dehydrogenase AMT6 from Alternaria alternata (Alternaria rot fungus).